The chain runs to 741 residues: Probable basic-leucine zipper transcription factor I (741 aa).

Positions 77-117 form a coiled coil; that stretch reads QIIEQIQFLQQQQQQQHDQIQQQLHNFQQQYQQQYQQRQQQ. Composition is skewed to low complexity over residues 153–164, 172–237, 277–290, and 381–390; these read QQPPQSLQQQQQ, PQQQ…QIQK, IQQQ…IQQK, and QQQQQQQQQQ. Disordered stretches follow at residues 153–237, 277–305, and 349–390; these read QQPP…QIQK, IQQQ…SNSM, and KQKE…QQQQ. The 64-residue stretch at 429-492 folds into the bZIP domain; sequence ESKKSIKRIN…HEGGTMAILK (64 aa). Residues 431-432 form a basic motif region; the sequence is KK. Residues 434-441 are leucine-zipper; it reads IKRINQNI.

Belongs to the bZIP family.

It localises to the nucleus. Functionally, probable transcriptional regulator. The polypeptide is Probable basic-leucine zipper transcription factor I (bzpI) (Dictyostelium discoideum (Social amoeba)).